The following is a 164-amino-acid chain: Cyclic pyranopterin monophosphate synthase (164 aa).

Substrate is bound by residues 75–77 (MCH) and 116–117 (ME). Residue Asp-131 is part of the active site.

This sequence belongs to the MoaC family. In terms of assembly, homohexamer; trimer of dimers.

It catalyses the reaction (8S)-3',8-cyclo-7,8-dihydroguanosine 5'-triphosphate = cyclic pyranopterin phosphate + diphosphate. The protein operates within cofactor biosynthesis; molybdopterin biosynthesis. Catalyzes the conversion of (8S)-3',8-cyclo-7,8-dihydroguanosine 5'-triphosphate to cyclic pyranopterin monophosphate (cPMP). The polypeptide is Cyclic pyranopterin monophosphate synthase (Staphylococcus aureus (strain USA300)).